The following is a 595-amino-acid chain: Chaperone protein HscA homolog (595 aa).

This sequence belongs to the heat shock protein 70 family.

Functionally, chaperone involved in the maturation of iron-sulfur cluster-containing proteins. Has a low intrinsic ATPase activity which is markedly stimulated by HscB. This chain is Chaperone protein HscA homolog, found in Rickettsia akari (strain Hartford).